Reading from the N-terminus, the 236-residue chain is Apoptosis regulator Bcl-2 (236 aa).

The BH4 signature appears at Asp-10–Trp-30. Thr-69 is modified (phosphothreonine; by MAPK8). At Ser-70 the chain carries Phosphoserine; by MAPK8 and PKC. Ser-84 is modified (phosphoserine; by MAPK8). The BH3 motif lies at Val-90–Arg-104. The BH1 motif lies at Glu-133–Gly-152. Residues Thr-184 to Tyr-199 carry the BH2 motif. Residues Phe-209–Gly-230 traverse the membrane as a helical segment.

This sequence belongs to the Bcl-2 family. Forms homodimers, and heterodimers with BAX, BAD, BAK and Bcl-X(L). Heterodimerization with BAX requires intact BH1 and BH2 motifs, and is necessary for anti-apoptotic activity. Component of the complex, at least composed of LRPPRC, BECN1 and BCL2; the interactions prevent BECN1 from forming an autophagy-inducing complex with PIK3C3. Interacts with EI24. Also interacts with APAF1, BBC3, BCL2L1, BNIPL, MRPL41 and TP53BP2. Binding to FKBP8 seems to target BCL2 to the mitochondria and probably interferes with the binding of BCL2 to its targets. Interacts with BAG1 in an ATP-dependent manner. Interacts with RAF1 (the 'Ser-338' and 'Ser-339' phosphorylated form). Interacts (via the BH4 domain) with EGLN3; the interaction prevents the formation of the BAX-BCL2 complex and inhibits the anti-apoptotic activity of BCL2. Interacts with G0S2; this interaction also prevents the formation of the anti-apoptotic BAX-BCL2 complex. Interacts with RTL10/BOP. Interacts with the SCF(FBXO10) complex. Interacts (via the loop between motifs BH4 and BH3) with NLRP1 (via LRR repeats), but not with NLRP2, NLRP3, NLRP4, PYCARD, nor MEFV. Interacts with GIMAP3/IAN4, GIMAP4/IAN1 and GIMAP5/IAN5. Interacts with BCAP31. Interacts with IRF3; the interaction is inhibited by Sendai virus infection. Interacts with BECN1; thereby inhibiting autophagy in non-starvation conditions. Interacts with AMBRA1; thereby inhibiting autophagy. Phosphorylation/dephosphorylation on Ser-70 regulates anti-apoptotic activity. Growth factor-stimulated phosphorylation on Ser-70 by PKC is required for the anti-apoptosis activity and occurs during the G2/M phase of the cell cycle. In the absence of growth factors, BCL2 appears to be phosphorylated by other protein kinases such as ERKs and stress-activated kinases. Phosphorylated by MAPK8/JNK1 at Thr-69, Ser-70 and Ser-84, which stimulates starvation-induced autophagy. Dephosphorylated by protein phosphatase 2A (PP2A). In terms of processing, proteolytically cleaved by caspases during apoptosis. The cleaved protein, lacking the BH4 motif, has pro-apoptotic activity, causes the release of cytochrome c into the cytosol promoting further caspase activity. Post-translationally, monoubiquitinated by PRKN, leading to an increase in its stability. Ubiquitinated by SCF(FBXO10), leading to its degradation by the proteasome.

Its subcellular location is the mitochondrion outer membrane. It localises to the nucleus membrane. It is found in the endoplasmic reticulum membrane. The protein localises to the cytoplasm. Suppresses apoptosis in a variety of cell systems including factor-dependent lymphohematopoietic and neural cells. Regulates cell death by controlling the mitochondrial membrane permeability. Appears to function in a feedback loop system with caspases. Inhibits caspase activity either by preventing the release of cytochrome c from the mitochondria and/or by binding to the apoptosis-activating factor (APAF-1). Also acts as an inhibitor of autophagy: interacts with BECN1 and AMBRA1 during non-starvation conditions and inhibits their autophagy function. May attenuate inflammation by impairing NLRP1-inflammasome activation, hence CASP1 activation and IL1B release. This chain is Apoptosis regulator Bcl-2 (BCL2), found in Cricetulus griseus (Chinese hamster).